We begin with the raw amino-acid sequence, 364 residues long: MAFATLFDSLYCPEEHLDLFHDTAADDDLHLDLHLHQPPPPPPLLDDDLPALFHALRGKEDPLRPAADDDGYGGVSAREAAVGWALRAVARLGFSALTAALAVAYLDRCFLGGALRLGDRPWMARLAAVACVALAAKVEETRVPVLLDLQLCAAERADPNEAYVFEDKTVRRMELLVLSALGWRMHPVTPLSYLQPLLGTAHAARLHHCDTALLALMPDWRWPRHRPSAWAAAALLATAGWCGGGGGDDAELLALIDAPKDEMAECAKIISEEAAAAAAGGIVIGGENKRKGAAGLYSAPASPSGVIGASACFSCDSSSSSVDSLFAALEPPGRPIKRGAAAATTADPLPADEESRDAWPPYAA.

Residues 331-364 (PPGRPIKRGAAAATTADPLPADEESRDAWPPYAA) are disordered. Over residues 340–349 (AAAATTADPL) the composition is skewed to low complexity.

The protein belongs to the cyclin family. Cyclin D subfamily.

This chain is Cyclin-D3-2 (CYCD3-2), found in Oryza sativa subsp. japonica (Rice).